Reading from the N-terminus, the 207-residue chain is Small ribosomal subunit protein uS10m (207 aa).

The N-terminal 14 residues, 1 to 14 (MNMFRQAVRSFVRY), are a transit peptide targeting the mitochondrion.

It belongs to the universal ribosomal protein uS10 family. Part of the mitochondrial small ribosomal subunit.

The protein localises to the mitochondrion. Involved in mitochondrial genome encoded proteins translation. Involved in the binding of tRNA to the ribosomes. The polypeptide is Small ribosomal subunit protein uS10m (RSM10) (Kluyveromyces lactis (strain ATCC 8585 / CBS 2359 / DSM 70799 / NBRC 1267 / NRRL Y-1140 / WM37) (Yeast)).